Consider the following 634-residue polypeptide: RNA polymerase sigma factor RpoD (634 aa).

The disordered stretch occupies residues 177-202 (LHDETPENDEENSSETEGEEHEDNHL). A compositionally biased stretch (acidic residues) spans 182 to 197 (PENDEENSSETEGEEH). Positions 385–455 (MIEANLRLVI…TRAIADQART (71 aa)) are sigma-70 factor domain-2. An Interaction with polymerase core subunit RpoC motif is present at residues 409-412 (DLIQ). Positions 464–541 (ETINKILRTS…DKNAVAPIDA (78 aa)) are sigma-70 factor domain-3. The tract at residues 554–607 (VLATLTPREERVLRMRFGIGMNTDHTLEEVGQQFKVTRERIRQIESKALRKLQH) is sigma-70 factor domain-4. Positions 580–599 (LEEVGQQFKVTRERIRQIES) form a DNA-binding region, H-T-H motif. The interval 608 to 634 (PIRSKKLNSFRSGGKRGDGNSSDLLEA) is disordered.

This sequence belongs to the sigma-70 factor family. RpoD/SigA subfamily. In terms of assembly, interacts transiently with the RNA polymerase catalytic core.

Its subcellular location is the cytoplasm. Functionally, sigma factors are initiation factors that promote the attachment of RNA polymerase to specific initiation sites and are then released. This sigma factor is the primary sigma factor during exponential growth. This is RNA polymerase sigma factor RpoD from Rickettsia conorii (strain ATCC VR-613 / Malish 7).